The chain runs to 37 residues: Large ribosomal subunit protein bL36c (37 aa).

This sequence belongs to the bacterial ribosomal protein bL36 family.

The protein resides in the plastid. It localises to the chloroplast. In Vitis vinifera (Grape), this protein is Large ribosomal subunit protein bL36c.